The following is a 449-amino-acid chain: Heterogeneous nuclear ribonucleoprotein H2 (449 aa).

Met-1 bears the N-acetylmethionine mark. Met-2 carries the N-acetylmethionine; in Heterogeneous nuclear ribonucleoprotein H2, N-terminally processed modification. Residues 11–90 (FVVKVRGLPW…RYVEVFKSNS (80 aa)) form the RRM 1 domain. Position 23 is a phosphoserine (Ser-23). Lys-35 is covalently cross-linked (Glycyl lysine isopeptide (Lys-Gly) (interchain with G-Cter in SUMO2)). Residues Ser-54 and Ser-63 each carry the phosphoserine modification. Lys-87 participates in a covalent cross-link: Glycyl lysine isopeptide (Lys-Gly) (interchain with G-Cter in SUMO2). A Phosphoserine modification is found at Ser-90. Residue Lys-98 forms a Glycyl lysine isopeptide (Lys-Gly) (interchain with G-Cter in SUMO2) linkage. The RRM 2 domain maps to 111-188 (GFVRLRGLPF…RYIEIFKSSR (78 aa)). The residue at position 233 (Arg-233) is a Dimethylated arginine; alternate. Omega-N-methylarginine; alternate is present on Arg-233. The stretch at 234–249 (GAYGGGYGGYDDYGGY) is one 1-1 repeat. The segment at 234 to 433 (GAYGGGYGGY…YGGQSSMSGY (200 aa)) is 2 X 16 AA Gly-rich approximate repeats. Tyr-246 carries the post-translational modification Phosphotyrosine. The 76-residue stretch at 289–364 (HCVHMRGLPY…RYVELFLNST (76 aa)) folds into the RRM 3 domain. The residue at position 310 (Ser-310) is a Phosphoserine. Repeat copies occupy residues 354-372 (HRYVELFLNSTAGTSGGAY), 374-392 (HSYVELFLNSTAGASGGAY), and 418-433 (GGYGGGYGGQSSMSGY). The segment at 354–392 (HRYVELFLNSTAGTSGGAYDHSYVELFLNSTAGASGGAY) is 2 X 19 AA perfect repeats.

In terms of assembly, component of a ribonucleoprotein complex containing mRNAs and RNA-binding proteins including DDX5, HNRNPH2 and SRSF1 as well as splicing regulator ARVCF. Interacts with TXNL4/DIM1.

It is found in the nucleus. The protein resides in the nucleoplasm. Its function is as follows. This protein is a component of the heterogeneous nuclear ribonucleoprotein (hnRNP) complexes which provide the substrate for the processing events that pre-mRNAs undergo before becoming functional, translatable mRNAs in the cytoplasm. Binds poly(RG). The polypeptide is Heterogeneous nuclear ribonucleoprotein H2 (HNRNPH2) (Bos taurus (Bovine)).